Reading from the N-terminus, the 571-residue chain is MDTQSSIGNEEWRIAGTSVVSGMALGKVFFLGTSPLHVRELTLPQEEVEHEIHRYYKALNRSKSDIVALEQEVTGQQGLQEVSSILQAHLEIMKDPLLTEEVVNTIRKDRKNAEYVFSSVMGKIEESLTAVRGMPSVVDRVQDIHDISNRVIGHLCCQHKSSLGESDQNLIIFSEELTPSEVASANSAYIRGFVSLVGAATSHTAIVSRAKSIPYLANISEELWNIAKRYNGKLVLIDGYRGELIFNPKPATLQSCYKKELSVVAHTSQRLVRKSLHPIVSSHAGSDKDVEDLLENFPQTSIGLFRSEFLAVILGRLPTLREQVDLYEKLARFPGDSPSVLRLFDFGEDKPCPGIKNKKERSIRWLLDYSVILEDQLQAIAKASLQGSIKVLIPGVSDVSEIIEVKKKWETIQTRFPKGHKVSWGTMIEFPSAVWMIEEILPECDFLSIGTNDLVQYTLGISRESALPKHLNVTLPPAVIRMIHHVLQAAKQNQVPVSICGEAAGQLSLTPLFIGLGVQELSVAMPVINRLRNHIALLELNSCLEITEALLQAKTCSEVEELLNRNNKITS.

The active-site Tele-phosphohistidine intermediate is H203. 2 residues coordinate phosphoenolpyruvate: R306 and R342. Positions 429 and 453 each coordinate Mg(2+). Residues N452–D453 and R463 each bind phosphoenolpyruvate. The Proton donor role is filled by C500.

It belongs to the PEP-utilizing enzyme family. Homodimer. Requires Mg(2+) as cofactor.

The protein localises to the cytoplasm. It carries out the reaction L-histidyl-[protein] + phosphoenolpyruvate = N(pros)-phospho-L-histidyl-[protein] + pyruvate. General (non sugar-specific) component of the phosphoenolpyruvate-dependent sugar phosphotransferase system (sugar PTS). This major carbohydrate active-transport system catalyzes the phosphorylation of incoming sugar substrates concomitantly with their translocation across the cell membrane. Enzyme I transfers the phosphoryl group from phosphoenolpyruvate (PEP) to the phosphoryl carrier protein (HPr). The chain is Phosphoenolpyruvate-protein phosphotransferase (ptsI) from Chlamydia pneumoniae (Chlamydophila pneumoniae).